A 116-amino-acid polypeptide reads, in one-letter code: Biogenesis of lysosome-related organelles complex 1 subunit CNL1 (116 aa).

A coiled-coil region spans residues 63-95 (DIVDVNIQSFKDILSKCEELENYFTMLDQIEMI).

It belongs to the BLOC1S4 family. Component of the biogenesis of lysosome-related organelles complex-1 (BLOC-1).

It localises to the cytoplasm. Component of the biogenesis of lysosome-related organelles complex-1 (BLOC-1), a complex that is involved in endosomal cargo sorting. The protein is Biogenesis of lysosome-related organelles complex 1 subunit CNL1 (CLN1) of Vanderwaltozyma polyspora (strain ATCC 22028 / DSM 70294 / BCRC 21397 / CBS 2163 / NBRC 10782 / NRRL Y-8283 / UCD 57-17) (Kluyveromyces polysporus).